We begin with the raw amino-acid sequence, 698 residues long: eEF1A lysine and N-terminal methyltransferase (698 aa).

Residue Met-1 is modified to N-acetylmethionine. A Phosphoserine modification is found at Ser-267. The interval 431–461 is disordered; it reads KDTSHRAQKKRKKDRKKQRPADTSEDFPPAP. The segment covering 436–448 has biased composition (basic residues); that stretch reads RAQKKRKKDRKKQ.

The protein belongs to the methyltransferase superfamily. In terms of assembly, forms a tripartite complex containing GAB1, METTL13 and SPRY2. Within the complex interacts with GAB1 and SPRY2. In terms of tissue distribution, expressed in the inner ear (at protein level). Expression is detected in the cochlear duct, spiral limbus region, efferent and afferent nerves, and in spiral ganglion neurons (at protein level).

Its subcellular location is the cytoplasm. It localises to the nucleus. The protein resides in the mitochondrion. The catalysed reaction is L-lysyl-[protein] + S-adenosyl-L-methionine = N(6)-methyl-L-lysyl-[protein] + S-adenosyl-L-homocysteine + H(+). It carries out the reaction N(6)-methyl-L-lysyl-[protein] + S-adenosyl-L-methionine = N(6),N(6)-dimethyl-L-lysyl-[protein] + S-adenosyl-L-homocysteine + H(+). The enzyme catalyses N-terminal glycyl-L-lysyl-L-glutamyl-[protein] + 3 S-adenosyl-L-methionine = N-terminal N,N,N-trimethyl-glycyl-L-lysyl-L-glutamyl-[protein] + 3 S-adenosyl-L-homocysteine + 3 H(+). Functionally, dual methyltransferase that catalyzes methylation of elongation factor 1-alpha (EEF1A1 and EEF1A2) at two different positions, and is therefore involved in the regulation of mRNA translation. Via its C-terminus, methylates EEF1A1 and EEF1A2 at the N-terminal residue 'Gly-2'. Via its N-terminus dimethylates EEF1A1 and EEF1A2 at residue 'Lys-55'. Has no activity towards core histones H2A, H2B, H3 and H4. The protein is eEF1A lysine and N-terminal methyltransferase of Mus musculus (Mouse).